We begin with the raw amino-acid sequence, 66 residues long: Large ribosomal subunit protein bL35 (66 aa).

This sequence belongs to the bacterial ribosomal protein bL35 family.

The chain is Large ribosomal subunit protein bL35 from Beijerinckia indica subsp. indica (strain ATCC 9039 / DSM 1715 / NCIMB 8712).